Here is a 299-residue protein sequence, read N- to C-terminus: Taste receptor type 2 member 42 (299 aa).

The Extracellular portion of the chain corresponds to 1 to 7; it reads MATELDK. A helical membrane pass occupies residues 8–28; the sequence is IFLILAIAEFIISMLGNVFIG. Topologically, residues 29-50 are cytoplasmic; it reads LVNCSEGIKNQKVFSSDFILTS. A helical membrane pass occupies residues 51-71; that stretch reads LAISTIGQLLVILFDSFLVGL. Residues 72–101 are Extracellular-facing; sequence ASHLYTTYRLGKPVIMLWHMTNHLTTWLAT. A helical transmembrane segment spans residues 102–122; it reads CLSVFYFFKIAHFPHSLFLWL. Residues 123 to 127 are Cytoplasmic-facing; that stretch reads RWRMN. A helical membrane pass occupies residues 128–148; it reads GMIAMLLILSLFLLIFDSSVL. Over 149-187 the chain is Extracellular; the sequence is EIFIDISLNIIDKSSLTLYLDESKTLYDKLSILKTLLSL. The chain crosses the membrane as a helical span at residues 188–208; it reads TSFIPFSLSLTSVLFLYLSLV. Over 209-238 the chain is Cytoplasmic; sequence RHTRNLKLSSLGSRDSSTEAHRRAMKMVMS. Residues 239–259 form a helical membrane-spanning segment; it reads FLFLFIVHFFSLQVANWIFFM. Residues 260–265 are Extracellular-facing; that stretch reads LWNNKY. Residues 266-286 traverse the membrane as a helical segment; the sequence is IKFVMLALNAFPSCHSFILIL. Topologically, residues 287 to 299 are cytoplasmic; that stretch reads GNSKLRQTAVRLL.

It belongs to the G-protein coupled receptor T2R family.

The protein resides in the membrane. Functionally, receptor that may play a role in the perception of bitterness and is gustducin-linked. May play a role in sensing the chemical composition of the gastrointestinal content. The activity of this receptor may stimulate alpha gustducin, mediate PLC-beta-2 activation and lead to the gating of TRPM5. The chain is Taste receptor type 2 member 42 (TAS2R42) from Gorilla gorilla gorilla (Western lowland gorilla).